The chain runs to 89 residues: Dynein light chain 1, cytoplasmic (89 aa).

Lysine 36 carries the N6-acetyllysine modification. A Glycyl lysine isopeptide (Lys-Gly) (interchain with G-Cter in SUMO2) cross-link involves residue lysine 43. Positions 67–89 are interaction with ESR1; the sequence is THETKHFIYFYLGQVAILLFKSG. A Phosphoserine modification is found at serine 88.

This sequence belongs to the dynein light chain family. As to quaternary structure, homodimer. Monomer; the monomeric form is incapable of binding to target proteins. The cytoplasmic dynein 1 complex consists of two catalytic heavy chains (HCs) and a number of non-catalytic subunits presented by intermediate chains (ICs), light intermediate chains (LICs) and light chains (LCs); the composition seems to vary in respect to the IC, LIC and LC composition. The heavy chain homodimer serves as a scaffold for the probable homodimeric assembly of the respective non-catalytic subunits. The ICs and LICs bind directly to the HC dimer and the LCs assemble on the IC dimer. Interacts with TXNDC17. Interacts with WWC1 and ESR1. The WWC1-DYNLL1 interaction is mandatory for the recruitment and transactivation functions of ESR1 or DYNLL1 to the target chromatin. Interacts with BCL2L11. Interacts with BCL2; the interaction is greatly enhanced in the nucleus and in mitochondria upon induction of apoptosis. Interacts with PAK1; the interaction requires dimeric DYNLL1. Interacts with MYZAP. Part of an astrin (SPAG5)-kinastrin (SKAP) complex containing KNSTRN, SPAG5, PLK1, DYNLL1 and SGO2. Interacts with ATMIN; this interaction inhibits ATMIN transcriptional activity and hence may play a role in a feedback loop whereby DYNLL1 inhibits transactivation of its own promoter by ATMIN. Interacts with NEK9 (not phosphorylated at 'Ser-944'). Interacts with BICD2. Interacts with BCAS1. Interacts with Basson/BSN. Interacts with HDAC6. Interacts with TPPP. Interacts with AMBRA1 (via TQT motifs); tethering AMBRA1 to the cytoskeleton. Interacts with FAM83D/CHICA (via C-terminus). Interacts with HMMR, SPAG5/Astrin and KNSTRN/Kinastrin. Interacts with TLK2. Interacts with NOS1. Interacts with WWC1, WWC2 and WWC3. Interacts with MRE11; inhibiting MRE11 homodimerization and activity. (Microbial infection) Interacts with bovine immunodeficiency virus Gag protein; this interaction is critical for intracellular microtubule-dependent viral genome transport. Post-translationally, phosphorylation at Ser-88 promotes recruitment to DNA double-strand breaks (DSBs) by TP53BP1 and ability to inhibit MRE11.

It localises to the cytoplasm. Its subcellular location is the cytoskeleton. The protein localises to the microtubule organizing center. It is found in the centrosome. The protein resides in the chromosome. It localises to the nucleus. Its subcellular location is the mitochondrion. Functionally, acts as one of several non-catalytic accessory components of the cytoplasmic dynein 1 complex that are thought to be involved in linking dynein to cargos and to adapter proteins that regulate dynein function. Cytoplasmic dynein 1 acts as a motor for the intracellular retrograde motility of vesicles and organelles along microtubules. May play a role in changing or maintaining the spatial distribution of cytoskeletal structures. In addition to its role in cytoskeleton and transport, acts as a protein-protein adapter, which inhibits and/or sequesters target proteins. Involved in the response to DNA damage by acting as a key regulator of DNA end resection: when phosphorylated at Ser-88, recruited to DNA double-strand breaks (DSBs) by TP53BP1 and acts by disrupting MRE11 dimerization, thereby inhibiting DNA end resection. In a subset of DSBs, DYNLL1 remains unphosphorylated and promotes the recruitment of the Shieldin complex. Binds and inhibits the catalytic activity of neuronal nitric oxide synthase/NOS1. Promotes transactivation functions of ESR1 and plays a role in the nuclear localization of ESR1. Regulates apoptotic activities of BCL2L11 by sequestering it to microtubules. Upon apoptotic stimuli the BCL2L11-DYNLL1 complex dissociates from cytoplasmic dynein and translocates to mitochondria and sequesters BCL2 thus neutralizing its antiapoptotic activity. The chain is Dynein light chain 1, cytoplasmic (DYNLL1) from Bos taurus (Bovine).